Consider the following 365-residue polypeptide: Chorismate synthase (365 aa).

The NADP(+) site is built by arginine 48 and arginine 54. Residues 125 to 127 (RSS), 237 to 238 (NA), glycine 277, 292 to 296 (KPTSS), and arginine 318 each bind FMN.

The protein belongs to the chorismate synthase family. Homotetramer. It depends on FMNH2 as a cofactor.

The catalysed reaction is 5-O-(1-carboxyvinyl)-3-phosphoshikimate = chorismate + phosphate. Its pathway is metabolic intermediate biosynthesis; chorismate biosynthesis; chorismate from D-erythrose 4-phosphate and phosphoenolpyruvate: step 7/7. Catalyzes the anti-1,4-elimination of the C-3 phosphate and the C-6 proR hydrogen from 5-enolpyruvylshikimate-3-phosphate (EPSP) to yield chorismate, which is the branch point compound that serves as the starting substrate for the three terminal pathways of aromatic amino acid biosynthesis. This reaction introduces a second double bond into the aromatic ring system. The protein is Chorismate synthase of Polaromonas naphthalenivorans (strain CJ2).